Reading from the N-terminus, the 379-residue chain is MKHLAILGSTGSIGQQTLKIIRSLPHLFKVVALASYGNNKDVFFEQIREFSPSIVSVYDEQSYFEISKEFPNIEVFLGEEGLLAAATAGEVDTIVAASSGVVALPAIIEAMKLGKTLALANKEVLVSAGEIIKEIAKQYQTRILPIDSEHNALYQCLEGKNTSEVKKLVLTASGGPLLYKSKEDLSRVTIRDVLKHPIWNMGAKITVDSSTLVNKGLEIIEAYWLFGLENAEIDAVVHPQSLIHGMVEFQDGTVLSVMNPPSMLFPIQHALTAPKRYPAPHKGIDFSVKQTLEFFPVDEERFPSIGLARQVLREKGSSGPFLNAANEVLVQRFLTEEIAWCDILDKLTRLMENYRVSSCSSLDDVFAVDKEARALAQEI.

NADPH is bound by residues Thr-10, Gly-11, Ser-12, Ile-13, Asn-39, and Asn-121. Position 122 (Lys-122) interacts with 1-deoxy-D-xylulose 5-phosphate. Glu-123 provides a ligand contact to NADPH. Asp-147 is a binding site for Mn(2+). Residues Ser-148, Glu-149, Ser-173, and His-196 each coordinate 1-deoxy-D-xylulose 5-phosphate. Glu-149 provides a ligand contact to Mn(2+). Gly-202 contributes to the NADPH binding site. 1-deoxy-D-xylulose 5-phosphate contacts are provided by Ser-209, Asn-214, Lys-215, and Glu-218. Glu-218 serves as a coordination point for Mn(2+).

The protein belongs to the DXR family. It depends on Mg(2+) as a cofactor. Mn(2+) is required as a cofactor.

It carries out the reaction 2-C-methyl-D-erythritol 4-phosphate + NADP(+) = 1-deoxy-D-xylulose 5-phosphate + NADPH + H(+). Its pathway is isoprenoid biosynthesis; isopentenyl diphosphate biosynthesis via DXP pathway; isopentenyl diphosphate from 1-deoxy-D-xylulose 5-phosphate: step 1/6. Catalyzes the NADPH-dependent rearrangement and reduction of 1-deoxy-D-xylulose-5-phosphate (DXP) to 2-C-methyl-D-erythritol 4-phosphate (MEP). In Chlamydia caviae (strain ATCC VR-813 / DSM 19441 / 03DC25 / GPIC) (Chlamydophila caviae), this protein is 1-deoxy-D-xylulose 5-phosphate reductoisomerase.